The chain runs to 421 residues: SH2 domain-containing protein 4A (421 aa).

Ser-117 and Ser-123 each carry phosphoserine. Residues 132-271 are disordered; the sequence is DLQAMKKTEP…FLQPLGIPPK (140 aa). Composition is skewed to basic and acidic residues over residues 163-201 and 211-230; these read TRKD…KEDS and KAAD…DYKR. Ser-232 carries the post-translational modification Phosphoserine. Residues 315 to 407 enclose the SH2 domain; sequence WFHGILTLKK…LGKELLLYPC (93 aa).

As to quaternary structure, interacts with ESR1. In the kidney, expressed only in the glomerulus. Expressed in T-cells, B-cells, macrophages and dendritic cells (at protein level). In adult, highest levels are found in muscle and lung with lower levels in kidney.

The protein resides in the cytoplasm. Functionally, inhibits estrogen-induced cell proliferation by competing with PLCG for binding to ESR1, blocking the effect of estrogen on PLCG and repressing estrogen-induced proliferation. May play a role in T-cell development and function. This chain is SH2 domain-containing protein 4A (Sh2d4a), found in Mus musculus (Mouse).